The following is a 500-amino-acid chain: MSEEKYIMAIDQGTTSSRAIIFNKKGEKIASSQKEFPQIFPQAGWVEHNANQIWNSVQSVIAGAFIESSIKPGQIEAIGITNQRETTVIWDKKTGLPIYNAIVWQSRQTAPIADQLKEDGYTDLIHEKTGLVIDAYFSATKIRWILDHVPGAQERAEKGELLFGTIDTWLVWKLTDGAAHVTDYSNAARTMLYNIKELKWDEEILKLLNIPKAILPEVKSNSEVYGKTAAFHFYGGEVPISGMAGDQQAALFGQLAFEPGMVKNTYGTGSFIIMNTGEDMQLSENNLLTTIGYGINGKVYYALEGSIFIAGSAIQWLRDGLRMIETSPESEALALASTSDDEIYVVPAFTGLGAPYWNSNARGSVFGLTRGTTKEDFVKATLQSIAYQVRDVIDTMQIDSGIDIQQLRVDGGAAMNNLLMQFQADILGIDIARAKNLETTALGAAFLAGLAVGYWEDLDSLKELNETGQLFKASMNESRKEKLYKGWKKAVMATQIFAEE.

Threonine 14 serves as a coordination point for ADP. The ATP site is built by threonine 14, threonine 15, and serine 16. Sn-glycerol 3-phosphate is bound at residue threonine 14. Arginine 18 contacts ADP. Sn-glycerol 3-phosphate contacts are provided by arginine 84, glutamate 85, and tyrosine 136. Residues arginine 84, glutamate 85, and tyrosine 136 each coordinate glycerol. Histidine 232 is modified (phosphohistidine; by HPr). Aspartate 246 provides a ligand contact to sn-glycerol 3-phosphate. Glycerol is bound by residues aspartate 246 and glutamine 247. Positions 268 and 311 each coordinate ADP. Residues threonine 268, glycine 311, glutamine 315, and glycine 412 each contribute to the ATP site. 2 residues coordinate ADP: glycine 412 and asparagine 416.

Belongs to the FGGY kinase family. Homotetramer and homodimer (in equilibrium). The phosphoenolpyruvate-dependent sugar phosphotransferase system (PTS), including enzyme I, and histidine-containing protein (HPr) are required for the phosphorylation, which leads to the activation of the enzyme.

It catalyses the reaction glycerol + ATP = sn-glycerol 3-phosphate + ADP + H(+). The protein operates within polyol metabolism; glycerol degradation via glycerol kinase pathway; sn-glycerol 3-phosphate from glycerol: step 1/1. Its activity is regulated as follows. Activated by phosphorylation and inhibited by fructose 1,6-bisphosphate (FBP). In terms of biological role, key enzyme in the regulation of glycerol uptake and metabolism. Catalyzes the phosphorylation of glycerol to yield sn-glycerol 3-phosphate. This Streptococcus uberis (strain ATCC BAA-854 / 0140J) protein is Glycerol kinase.